Consider the following 170-residue polypeptide: Arginine repressor (170 aa).

This sequence belongs to the ArgR family.

It is found in the cytoplasm. Its pathway is amino-acid biosynthesis; L-arginine biosynthesis [regulation]. In terms of biological role, regulates arginine biosynthesis genes. The polypeptide is Arginine repressor (Mycobacterium tuberculosis (strain ATCC 25177 / H37Ra)).